Here is a 256-residue protein sequence, read N- to C-terminus: Pimeloyl-[acyl-carrier protein] methyl ester esterase (256 aa).

The AB hydrolase-1 domain maps to 15 to 242; the sequence is HLVLLHGWGL…AAHAPFISHP (228 aa). Residues Trp-22, 82 to 83, and 143 to 147 each bind substrate; these read SL and FLALQ. Ser-82 serves as the catalytic Nucleophile. Residues Asp-207 and His-235 contribute to the active site. A substrate-binding site is contributed by His-235.

This sequence belongs to the AB hydrolase superfamily. Carboxylesterase BioH family. In terms of assembly, monomer.

It localises to the cytoplasm. It carries out the reaction 6-carboxyhexanoyl-[ACP] methyl ester + H2O = 6-carboxyhexanoyl-[ACP] + methanol + H(+). Its pathway is cofactor biosynthesis; biotin biosynthesis. Functionally, the physiological role of BioH is to remove the methyl group introduced by BioC when the pimeloyl moiety is complete. It allows to synthesize pimeloyl-ACP via the fatty acid synthetic pathway through the hydrolysis of the ester bonds of pimeloyl-ACP esters. The polypeptide is Pimeloyl-[acyl-carrier protein] methyl ester esterase (Escherichia coli O157:H7).